The chain runs to 88 residues: Cell division topological specificity factor (88 aa).

It belongs to the MinE family.

In terms of biological role, prevents the cell division inhibition by proteins MinC and MinD at internal division sites while permitting inhibition at polar sites. This ensures cell division at the proper site by restricting the formation of a division septum at the midpoint of the long axis of the cell. This chain is Cell division topological specificity factor, found in Psychromonas ingrahamii (strain DSM 17664 / CCUG 51855 / 37).